We begin with the raw amino-acid sequence, 267 residues long: Undecaprenyl-diphosphatase (267 aa).

The next 8 membrane-spanning stretches (helical) occupy residues 4 to 24 (ILII…PISS), 41 to 61 (NIQN…ILLF), 84 to 104 (ILIL…GFMF), 116 to 136 (YISY…FISL), 160 to 180 (CFSL…GLIL), 185 to 205 (YVLF…VLIL), 216 to 236 (ENIF…LIFG), and 246 to 266 (TSLI…LFTC).

Belongs to the UppP family.

The protein localises to the cell membrane. It carries out the reaction di-trans,octa-cis-undecaprenyl diphosphate + H2O = di-trans,octa-cis-undecaprenyl phosphate + phosphate + H(+). Catalyzes the dephosphorylation of undecaprenyl diphosphate (UPP). Confers resistance to bacitracin. This chain is Undecaprenyl-diphosphatase, found in Wigglesworthia glossinidia brevipalpis.